The primary structure comprises 202 residues: Venom allergen 5 (202 aa).

Disulfide bonds link Cys-4–Cys-16, Cys-8–Cys-101, and Cys-26–Cys-94. Position 107 is a phosphotyrosine (Tyr-107). The N-linked (Glc) (glycation) lysine glycan is linked to Lys-138. Cys-168 and Cys-185 are oxidised to a cystine.

This sequence belongs to the CRISP family. As to expression, expressed by the venom gland.

Its subcellular location is the secreted. Its function is as follows. Does not show toxicity when intravenously injected into mice tail. The sequence is that of Venom allergen 5 from Vespa velutina (Asian yellow-legged hornet).